The primary structure comprises 208 residues: Large ribosomal subunit protein bL25 (208 aa).

Positions 163–208 are disordered; it reads DYSYNHEPDEVVASILPPQKQEETEAESAAQDVEEPEKGTEEEKEE. Basic and acidic residues predominate over residues 198 to 208; that stretch reads PEKGTEEEKEE.

This sequence belongs to the bacterial ribosomal protein bL25 family. CTC subfamily. Part of the 50S ribosomal subunit; part of the 5S rRNA/L5/L18/L25 subcomplex. Contacts the 5S rRNA. Binds to the 5S rRNA independently of L5 and L18.

Its function is as follows. This is one of the proteins that binds to the 5S RNA in the ribosome where it forms part of the central protuberance. This chain is Large ribosomal subunit protein bL25, found in Bacillus licheniformis (strain ATCC 14580 / DSM 13 / JCM 2505 / CCUG 7422 / NBRC 12200 / NCIMB 9375 / NCTC 10341 / NRRL NRS-1264 / Gibson 46).